The chain runs to 300 residues: Small ribosomal subunit protein uS2 (300 aa).

The disordered stretch occupies residues 278–300; it reads GEAQTGNEGWGTEAAAPAATTQW.

This sequence belongs to the universal ribosomal protein uS2 family. Component of the small ribosomal subunit. Mature ribosomes consist of a small (40S) and a large (60S) subunit. The 40S subunit contains about 33 different proteins and 1 molecule of RNA (18S). The 60S subunit contains about 49 different proteins and 3 molecules of RNA (25S, 5.8S and 5S). Interacts with rps21.

The protein resides in the cytoplasm. Functionally, required for the assembly and/or stability of the 40S ribosomal subunit. Required for the processing of the 20S rRNA-precursor to mature 18S rRNA in a late step of the maturation of 40S ribosomal subunits. In Pyrenophora tritici-repentis (strain Pt-1C-BFP) (Wheat tan spot fungus), this protein is Small ribosomal subunit protein uS2 (rps0).